The sequence spans 103 residues: ELVSQLCLKKERVCEGSSLTISCPQKGAGISIARAIYGRTKTQVCPSDGATSNVNCKASNALNVVRDLCRGKSSCTVEASNDVFGDPCMHTYKYLELSYDCSK.

The region spanning 13 to 102 (VCEGSSLTIS…KYLELSYDCS (90 aa)) is the SUEL-type lectin domain. 4 cysteine pairs are disulfide-bonded: C14-C45, C23-C101, C56-C88, and C69-C75.

In terms of assembly, homodimer; disulfide-linked. Not glycosylated.

In terms of biological role, rhamnose-binding lectin. Also binds alpha-D-melibiose, alpha-D-lactose, beta-D-lactose, methyl-alpha-D-galactopyranoside, methyl-beta-D--galactopyranoside and D-galactose but not D-arabinose, L-fucose, D-glucose, D-mannose, D-maltose, D-sucrose, N-acetyl-D-galactosamine, N-acetyl-D-glucosamine, N-acetyl-D-mannosamine-D-xylose or by glycoproteins orosomucoid, thyroglobulin, ovomucoid and porcine stomach mucin. Shows cation-independent hemagglutinating activity against rabbit and human erythrocytes. Agglutinates cells of Gram-positive bacterial species S.aureus but not those of Gram-negative E.coli. This chain is L-rhamnose-binding lectin ELEL-1, found in Echinometra lucunter (Rock-boring urchin).